A 611-amino-acid chain; its full sequence is MARNFLLVLLWFIVQVSSSHENGRGDQALSQIDIYAINLAQHHSAFIHVSPLVLGSQGQDTEWVNVVISNPEPSSDDWVGVFSPAKFDSSSCAPTDDKEIAPFICSAPVKYMYAKSSPDYMKTGNAVLKFMLINQRADFSFALFTGGLSNPTLVSVSNHVSFINPKAPVYPRLALGKKWDEMTVTWTSGYNIGEAVPFVEWSRKGTRSRRSPAGTLTFTRNSMCGAPARTVGWRDPGFIHTASLKDLWPNLKYTYRMGHELMNGSIVWSKNFTFKSSPYPGQDSLQRVIIFGDMGKGERDGSNEYNDYQPGSLNTTDQLIKDLKNIDIVFHIGDITYANGYISQWDQFTAQVEPIASTVPYMVASGNHERDWPDSGSFYGGKDSGGECGVPAETMFDFPAENKAKFWYSADYGMFRFCVADTEHDWREGSEQYQFIERCLASVDRRAQPWLIFIAHRVLGYSTNDWYGQEGSFEEPMGRESLQKLWQKYKVDIAFYGHVHNYERTCPIYQNQCMDNEKSHYSGAFKGTIHVVVGGAGSHLSSFSSLKPKWSIFRDYDYGFVKLTAFDHSSLLFEYKKSSNGAVHDSFTIFREYRDVLACVRDSCEPTTLAS.

Residues 1–18 (MARNFLLVLLWFIVQVSS) form the signal peptide. Asn-263 and Asn-271 each carry an N-linked (GlcNAc...) asparagine glycan. Asp-293 lines the Fe cation pocket. The N-linked (GlcNAc...) asparagine glycan is linked to Asn-314. Fe cation contacts are provided by Asp-334 and Tyr-337. Residue Asp-334 participates in Zn(2+) binding. Zn(2+) contacts are provided by Asn-367, His-456, and His-498. Asn-367 contacts substrate. 498 to 500 (HVH) contributes to the substrate binding site. His-500 contributes to the Fe cation binding site.

This sequence belongs to the metallophosphoesterase superfamily. Purple acid phosphatase family. In terms of assembly, homodimer. Fe cation is required as a cofactor. The cofactor is Zn(2+). Expressed in roots, stems, leaves, flowers and siliques.

It is found in the secreted. This chain is Probable inactive purple acid phosphatase 27 (PAP27), found in Arabidopsis thaliana (Mouse-ear cress).